We begin with the raw amino-acid sequence, 37 residues long: Cytochrome b6-f complex subunit 7 (37 aa).

A helical membrane pass occupies residues 11–29 (AVLLMVLVLVGLAWGFLLL).

It belongs to the PetM family. The 4 large subunits of the cytochrome b6-f complex are cytochrome b6, subunit IV (17 kDa polypeptide, PetD), cytochrome f and the Rieske protein, while the 4 small subunits are PetG, PetL, PetM and PetN. The complex functions as a dimer.

The protein localises to the cellular thylakoid membrane. In terms of biological role, component of the cytochrome b6-f complex, which mediates electron transfer between photosystem II (PSII) and photosystem I (PSI), cyclic electron flow around PSI, and state transitions. This chain is Cytochrome b6-f complex subunit 7, found in Rippkaea orientalis (strain PCC 8801 / RF-1) (Cyanothece sp. (strain PCC 8801)).